The sequence spans 106 residues: Cyclin-dependent protein kinase inhibitor SMR15 (106 aa).

Functionally, probable cyclin-dependent protein kinase (CDK) inhibitor that functions as a repressor of mitosis in the endoreduplication cell cycle. The sequence is that of Cyclin-dependent protein kinase inhibitor SMR15 from Arabidopsis thaliana (Mouse-ear cress).